The primary structure comprises 474 residues: tRNA-2-methylthio-N(6)-dimethylallyladenosine synthase (474 aa).

The MTTase N-terminal domain occupies Lys-3–Arg-120. [4Fe-4S] cluster contacts are provided by Cys-12, Cys-49, Cys-83, Cys-157, Cys-161, and Cys-164. Positions Arg-143–Arg-375 constitute a Radical SAM core domain. A TRAM domain is found at Arg-378 to Arg-441.

The protein belongs to the methylthiotransferase family. MiaB subfamily. In terms of assembly, monomer. [4Fe-4S] cluster is required as a cofactor.

The protein localises to the cytoplasm. The enzyme catalyses N(6)-dimethylallyladenosine(37) in tRNA + (sulfur carrier)-SH + AH2 + 2 S-adenosyl-L-methionine = 2-methylsulfanyl-N(6)-dimethylallyladenosine(37) in tRNA + (sulfur carrier)-H + 5'-deoxyadenosine + L-methionine + A + S-adenosyl-L-homocysteine + 2 H(+). Its function is as follows. Catalyzes the methylthiolation of N6-(dimethylallyl)adenosine (i(6)A), leading to the formation of 2-methylthio-N6-(dimethylallyl)adenosine (ms(2)i(6)A) at position 37 in tRNAs that read codons beginning with uridine. The sequence is that of tRNA-2-methylthio-N(6)-dimethylallyladenosine synthase from Shewanella frigidimarina (strain NCIMB 400).